A 312-amino-acid polypeptide reads, in one-letter code: MKSMLVVTISVWLILAPTSTWAVNTIIYNVGSTTISKYATFLDDLRNEAKDPNLKCYGIPMLPNTNSNPKYVLVELQGSNKKTITLMLRRNNLYVMGYSDPFDTSKCRYHIFNDISGTERQDVETTLCPNSNSRVSKNINYDSRYPTLESKVGVKSRSQVQLGIQILDSDIGKISGVTSFSEKTEAEFLLVAIQISEAARFKYIENQVKTNFNRAFNPNPKVLNLEETWGKISTAIHDAKNGVLPKPLELVDASGAKWIVLRVDEIKPDVALLNYVSGSCQTTYNQNAMFPQLIMSTYYNYMANLGDLFEEF.

A signal peptide spans 1–22 (MKSMLVVTISVWLILAPTSTWA). Intrachain disulfides connect Cys56–Cys280 and Cys107–Cys128. Glu197 is an active-site residue. Residues 284–312 (YNQNAMFPQLIMSTYYNYMANLGDLFEEF) constitute a propeptide that is removed on maturation.

The catalysed reaction is Endohydrolysis of the N-glycosidic bond at one specific adenosine on the 28S rRNA.. In terms of biological role, inhibits protein synthesis in vitro. This Phytolacca heterotepala (Mexican pokeweed) protein is Heterotepalin-4.